We begin with the raw amino-acid sequence, 380 residues long: Queuine tRNA-ribosyltransferase (380 aa).

Catalysis depends on Asp96, which acts as the Proton acceptor. Substrate is bound by residues 96-100 (DSGGF), Asp150, Gln193, and Gly220. The RNA binding stretch occupies residues 251-257 (GVGAPDS). The active-site Nucleophile is Asp270. The tract at residues 275-279 (TRIAR) is RNA binding; important for wobble base 34 recognition. Cys308, Cys310, Cys313, and His339 together coordinate Zn(2+).

It belongs to the queuine tRNA-ribosyltransferase family. Homodimer. Within each dimer, one monomer is responsible for RNA recognition and catalysis, while the other monomer binds to the replacement base PreQ1. It depends on Zn(2+) as a cofactor.

It catalyses the reaction 7-aminomethyl-7-carbaguanine + guanosine(34) in tRNA = 7-aminomethyl-7-carbaguanosine(34) in tRNA + guanine. It functions in the pathway tRNA modification; tRNA-queuosine biosynthesis. Catalyzes the base-exchange of a guanine (G) residue with the queuine precursor 7-aminomethyl-7-deazaguanine (PreQ1) at position 34 (anticodon wobble position) in tRNAs with GU(N) anticodons (tRNA-Asp, -Asn, -His and -Tyr). Catalysis occurs through a double-displacement mechanism. The nucleophile active site attacks the C1' of nucleotide 34 to detach the guanine base from the RNA, forming a covalent enzyme-RNA intermediate. The proton acceptor active site deprotonates the incoming PreQ1, allowing a nucleophilic attack on the C1' of the ribose to form the product. After dissociation, two additional enzymatic reactions on the tRNA convert PreQ1 to queuine (Q), resulting in the hypermodified nucleoside queuosine (7-(((4,5-cis-dihydroxy-2-cyclopenten-1-yl)amino)methyl)-7-deazaguanosine). This is Queuine tRNA-ribosyltransferase from Streptococcus thermophilus (strain ATCC BAA-491 / LMD-9).